The following is a 568-amino-acid chain: Urease subunit alpha (568 aa).

Residues 130–568 (GGIDTHIHFI…LPMAQRYFLF (439 aa)) enclose the Urease domain. Ni(2+) contacts are provided by His135, His137, and Lys218. At Lys218 the chain carries N6-carboxylysine. Residue His220 participates in substrate binding. His247 and His273 together coordinate Ni(2+). Residue His321 is the Proton donor of the active site. Asp361 is a Ni(2+) binding site.

This sequence belongs to the metallo-dependent hydrolases superfamily. Urease alpha subunit family. As to quaternary structure, heterotrimer of UreA (gamma), UreB (beta) and UreC (alpha) subunits. Three heterotrimers associate to form the active enzyme. The cofactor is Ni cation. Carboxylation allows a single lysine to coordinate two nickel ions.

The protein resides in the cytoplasm. It carries out the reaction urea + 2 H2O + H(+) = hydrogencarbonate + 2 NH4(+). Its pathway is nitrogen metabolism; urea degradation; CO(2) and NH(3) from urea (urease route): step 1/1. The polypeptide is Urease subunit alpha (Burkholderia ambifaria (strain ATCC BAA-244 / DSM 16087 / CCUG 44356 / LMG 19182 / AMMD) (Burkholderia cepacia (strain AMMD))).